We begin with the raw amino-acid sequence, 304 residues long: Homoserine kinase (304 aa).

91-101 (PLGKGMGSSAA) provides a ligand contact to ATP.

The protein belongs to the GHMP kinase family. Homoserine kinase subfamily.

It is found in the cytoplasm. The enzyme catalyses L-homoserine + ATP = O-phospho-L-homoserine + ADP + H(+). It participates in amino-acid biosynthesis; L-threonine biosynthesis; L-threonine from L-aspartate: step 4/5. Catalyzes the ATP-dependent phosphorylation of L-homoserine to L-homoserine phosphate. The polypeptide is Homoserine kinase (Solibacter usitatus (strain Ellin6076)).